The chain runs to 297 residues: uncharacterized protein (297 aa).

Residue Glu46 is part of the active site.

This sequence belongs to the PhzF family. In terms of assembly, homodimer and homotetramer.

This is an uncharacterized protein from Escherichia coli O157:H7.